The following is a 224-amino-acid chain: Propanediol dehydratase medium subunit (224 aa).

The interval 1 to 18 (MEINEKLLRQIIEDVLSE) is targets protein to the BMC.

Belongs to the diol/glycerol dehydratase medium subunit family. As to quaternary structure, the propanediol dehydratase enzyme is a heterotrimeric complex composed of a large (PduC), a medium (PduD) and a small (PduE) subunit. It depends on adenosylcob(III)alamin as a cofactor.

It is found in the bacterial microcompartment. It carries out the reaction propane-1,2-diol = propanal + H2O. It functions in the pathway polyol metabolism; 1,2-propanediol degradation. Its function is as follows. Part of the PduCDE complex that catalyzes the dehydration of 1,2-propanediol (1,2-PD) to propionaldehyde. This subunit is directly targeted to the bacterial microcompartment (BMC). Functionally, expression of a cosmid containing the full 21-gene pdu operon in E.coli allows E.coli to grow on 1,2-propanediol (1,2-PD) with the appearance of BMCs in its cytoplasm. In terms of biological role, the 1,2-PD-specific bacterial microcompartment (BMC) concentrates low levels of 1,2-PD catabolic enzymes, concentrates volatile reaction intermediates thus enhancing pathway flux and keeps the level of toxic, mutagenic propionaldehyde low. The chain is Propanediol dehydratase medium subunit from Citrobacter freundii.